A 101-amino-acid chain; its full sequence is Protein Tat (101 aa).

Positions Met-1 to Asn-24 are interaction with human CREBBP. The transactivation stretch occupies residues Met-1–Gly-48. 3 residues coordinate Zn(2+): Cys-22, Cys-25, and Cys-27. The interval Cys-22–Cys-37 is cysteine-rich. Lys-28 carries the post-translational modification N6-acetyllysine; by host PCAF. Zn(2+) is bound by residues Cys-30, His-33, Cys-34, and Cys-37. The tract at residues Phe-38–Gly-48 is core. Positions Tyr-47 to His-101 are disordered. Positions Gly-48–Arg-57 are enriched in basic residues. The Nuclear localization signal, RNA-binding (TAR), and protein transduction motif lies at Arg-49–Arg-57. Positions Arg-49–Glu-86 are interaction with the host capping enzyme RNGTT. Residues Lys-50 and Lys-51 each carry the N6-acetyllysine; by host EP300 and GCN5L2 modification. Residues Arg-52 and Arg-53 each carry the asymmetric dimethylarginine; by host PRMT6 modification. Over residues Asp-61–Leu-77 the composition is skewed to polar residues. A Glycyl lysine isopeptide (Lys-Gly) (interchain with G-Cter in ubiquitin) cross-link involves residue Lys-71. Positions Arg-78–Asp-80 match the Cell attachment site motif. A compositionally biased stretch (basic and acidic residues) spans Glu-86–His-101.

It belongs to the lentiviruses Tat family. As to quaternary structure, interacts with host CCNT1. Associates with the P-TEFb complex composed at least of Tat, P-TEFb (CDK9 and CCNT1), TAR RNA, RNA Pol II. Recruits the HATs CREBBP, TAF1/TFIID, EP300, PCAF and GCN5L2. Interacts with host KAT5/Tip60; this interaction targets the latter to degradation. Interacts with the host deacetylase SIRT1. Interacts with host capping enzyme RNGTT; this interaction stimulates RNGTT. Binds to host KDR, and to the host integrins ITGAV/ITGB3 and ITGA5/ITGB1. Interacts with host KPNB1/importin beta-1 without previous binding to KPNA1/importin alpha-1. Interacts with EIF2AK2. Interacts with host nucleosome assembly protein NAP1L1; this interaction may be required for the transport of Tat within the nucleus, since the two proteins interact at the nuclear rim. Interacts with host C1QBP/SF2P32; this interaction involves lysine-acetylated Tat. Interacts with the host chemokine receptors CCR2, CCR3 and CXCR4. Interacts with host DPP4/CD26; this interaction may trigger an anti-proliferative effect. Interacts with host LDLR. Interacts with the host extracellular matrix metalloproteinase MMP1. Interacts with host PRMT6; this interaction mediates Tat's methylation. Interacts with, and is ubiquitinated by MDM2/Hdm2. Interacts with host PSMC3 and HTATIP2. Interacts with STAB1; this interaction may overcome SATB1-mediated repression of IL2 and IL2RA (interleukin) in T cells by binding to the same domain than HDAC1. Interacts (when acetylated) with human CDK13, thereby increasing HIV-1 mRNA splicing and promoting the production of the doubly spliced HIV-1 protein Nef. Interacts with host TBP; this interaction modulates the activity of transcriptional pre-initiation complex. Interacts with host RELA. Interacts with host PLSCR1; this interaction negatively regulates Tat transactivation activity by altering its subcellular distribution. Asymmetrical arginine methylation by host PRMT6 seems to diminish the transactivation capacity of Tat and affects the interaction with host CCNT1. In terms of processing, acetylation by EP300, CREBBP, GCN5L2/GCN5 and PCAF regulates the transactivation activity of Tat. EP300-mediated acetylation of Lys-50 promotes dissociation of Tat from the TAR RNA through the competitive binding to PCAF's bromodomain. In addition, the non-acetylated Tat's N-terminus can also interact with PCAF. PCAF-mediated acetylation of Lys-28 enhances Tat's binding to CCNT1. Lys-50 is deacetylated by SIRT1. Post-translationally, polyubiquitination by host MDM2 does not target Tat to degradation, but activates its transactivation function and fosters interaction with CCNT1 and TAR RNA. Phosphorylated by EIF2AK2 on serine and threonine residues adjacent to the basic region important for TAR RNA binding and function. Phosphorylation of Tat by EIF2AK2 is dependent on the prior activation of EIF2AK2 by dsRNA.

The protein localises to the host nucleus. It localises to the host nucleolus. It is found in the host cytoplasm. Its subcellular location is the secreted. Functionally, transcriptional activator that increases RNA Pol II processivity, thereby increasing the level of full-length viral transcripts. Recognizes a hairpin structure at the 5'-LTR of the nascent viral mRNAs referred to as the transactivation responsive RNA element (TAR) and recruits the cyclin T1-CDK9 complex (P-TEFb complex) that will in turn hyperphosphorylate the RNA polymerase II to allow efficient elongation. The CDK9 component of P-TEFb and other Tat-activated kinases hyperphosphorylate the C-terminus of RNA Pol II that becomes stabilized and much more processive. Other factors such as HTATSF1/Tat-SF1, SUPT5H/SPT5, and HTATIP2 are also important for Tat's function. Besides its effect on RNA Pol II processivity, Tat induces chromatin remodeling of proviral genes by recruiting the histone acetyltransferases (HATs) CREBBP, EP300 and PCAF to the chromatin. This also contributes to the increase in proviral transcription rate, especially when the provirus integrates in transcriptionally silent region of the host genome. To ensure maximal activation of the LTR, Tat mediates nuclear translocation of NF-kappa-B by interacting with host RELA. Through its interaction with host TBP, Tat may also modulate transcription initiation. Tat can reactivate a latently infected cell by penetrating in it and transactivating its LTR promoter. In the cytoplasm, Tat is thought to act as a translational activator of HIV-1 mRNAs. In terms of biological role, extracellular circulating Tat can be endocytosed by surrounding uninfected cells via the binding to several surface receptors such as CD26, CXCR4, heparan sulfate proteoglycans (HSPG) or LDLR. Neurons are rarely infected, but they internalize Tat via their LDLR. Through its interaction with nuclear HATs, Tat is potentially able to control the acetylation-dependent cellular gene expression. Modulates the expression of many cellular genes involved in cell survival, proliferation or in coding for cytokines or cytokine receptors. Tat plays a role in T-cell and neurons apoptosis. Tat induced neurotoxicity and apoptosis probably contribute to neuroAIDS. Circulating Tat also acts as a chemokine-like and/or growth factor-like molecule that binds to specific receptors on the surface of the cells, affecting many cellular pathways. In the vascular system, Tat binds to ITGAV/ITGB3 and ITGA5/ITGB1 integrins dimers at the surface of endothelial cells and competes with bFGF for heparin-binding sites, leading to an excess of soluble bFGF. The polypeptide is Protein Tat (Human immunodeficiency virus type 1 group M subtype B (isolate YU-2) (HIV-1)).